A 302-amino-acid polypeptide reads, in one-letter code: Oxygen-dependent coproporphyrinogen-III oxidase (302 aa).

A substrate-binding site is contributed by serine 94. 2 residues coordinate a divalent metal cation: histidine 98 and histidine 108. Histidine 108 acts as the Proton donor in catalysis. 110–112 (NVR) contributes to the substrate binding site. Residues histidine 147 and histidine 177 each coordinate a divalent metal cation. The segment at 242 to 277 (YVEFNLVYDRGTLFGLQTGGRTESILMSMPPLVRWQ) is important for dimerization. 260–262 (GGR) provides a ligand contact to substrate.

It belongs to the aerobic coproporphyrinogen-III oxidase family. In terms of assembly, homodimer. A divalent metal cation serves as cofactor.

It localises to the cytoplasm. The catalysed reaction is coproporphyrinogen III + O2 + 2 H(+) = protoporphyrinogen IX + 2 CO2 + 2 H2O. It functions in the pathway porphyrin-containing compound metabolism; protoporphyrin-IX biosynthesis; protoporphyrinogen-IX from coproporphyrinogen-III (O2 route): step 1/1. Its function is as follows. Involved in the heme biosynthesis. Catalyzes the aerobic oxidative decarboxylation of propionate groups of rings A and B of coproporphyrinogen-III to yield the vinyl groups in protoporphyrinogen-IX. The chain is Oxygen-dependent coproporphyrinogen-III oxidase from Shewanella sp. (strain MR-4).